A 196-amino-acid chain; its full sequence is Peptidoglycan recognition protein (196 aa).

Positions 1 to 23 (MARLHSAVVLALALSSLLTEIAA) are cleaved as a signal peptide. Cystine bridges form between Cys-25-Cys-147 and Cys-61-Cys-67. Residues 46–173 (RPVSLVIVQH…RQLIASESPG (128 aa)) enclose the N-acetylmuramoyl-L-alanine amidase domain.

The protein belongs to the N-acetylmuramoyl-L-alanine amidase 2 family. In terms of assembly, monomer. As to expression, constitutively expressed in fat body, epithelial cells and hemocytes. Not detected in Malpighian tubules, silk gland or midgut.

In terms of biological role, binds specifically to peptidoglycan and triggers the propenoloxidase cascade which is an important insect defense mechanism. In Bombyx mori (Silk moth), this protein is Peptidoglycan recognition protein.